The primary structure comprises 22 residues: AAKPLDKSSSSLHHGYSKVHVP.

The disordered stretch occupies residues Ala1–Pro22.

It localises to the cell membrane. Its function is as follows. Binds various plasma and ECM-proteins. This is 65 kDa membrane protein from Staphylococcus aureus.